The following is a 109-amino-acid chain: Photosystem II reaction center Psb28 protein (109 aa).

The protein belongs to the Psb28 family. In terms of assembly, part of the photosystem II complex.

Its subcellular location is the plastid. It localises to the chloroplast thylakoid membrane. This is Photosystem II reaction center Psb28 protein from Cyanidioschyzon merolae (strain NIES-3377 / 10D) (Unicellular red alga).